The following is a 290-amino-acid chain: Virginiamycin B lyase (290 aa).

His-226 provides a ligand contact to substrate. Residue Glu-265 participates in Mg(2+) binding. Residue His-267 is the Proton acceptor of the active site. Glu-282 contributes to the Mg(2+) binding site.

It belongs to the Vgb family. Monomer. It depends on Mg(2+) as a cofactor.

In terms of biological role, inactivates the type B streptogramin antibiotics by linearizing the lactone ring at the ester linkage, generating a free phenylglycine carboxylate and converting the threonyl moiety into 2-amino-butenoic acid. This chain is Virginiamycin B lyase, found in Mycolicibacterium vanbaalenii (strain DSM 7251 / JCM 13017 / BCRC 16820 / KCTC 9966 / NRRL B-24157 / PYR-1) (Mycobacterium vanbaalenii).